The sequence spans 533 residues: Malate synthase A (533 aa).

Residue Arg166 is the Proton acceptor of the active site. Asp447 (proton donor) is an active-site residue.

The protein belongs to the malate synthase family.

Its subcellular location is the cytoplasm. The enzyme catalyses glyoxylate + acetyl-CoA + H2O = (S)-malate + CoA + H(+). The protein operates within carbohydrate metabolism; glyoxylate cycle; (S)-malate from isocitrate: step 2/2. The sequence is that of Malate synthase A (aceB) from Escherichia coli (strain K12).